Reading from the N-terminus, the 460-residue chain is uncharacterized protein (460 aa).

The region spanning 6–64 is the TRAM domain; that stretch reads PVKKNNDYEIYIDDFGNMGEGIGKIDNFTVFVKDAVKGEKVRAKIIKVNKSFAIGKLID. Positions 77, 83, 86, and 166 each coordinate [4Fe-4S] cluster. S-adenosyl-L-methionine-binding residues include glutamine 290, tyrosine 319, glutamate 340, and aspartate 388. Residue cysteine 415 is the Nucleophile of the active site.

The protein belongs to the class I-like SAM-binding methyltransferase superfamily. RNA M5U methyltransferase family.

This is an uncharacterized protein from Clostridium acetobutylicum (strain ATCC 824 / DSM 792 / JCM 1419 / IAM 19013 / LMG 5710 / NBRC 13948 / NRRL B-527 / VKM B-1787 / 2291 / W).